The chain runs to 93 residues: Small ribosomal subunit protein uS19 (93 aa).

The protein belongs to the universal ribosomal protein uS19 family.

In terms of biological role, protein S19 forms a complex with S13 that binds strongly to the 16S ribosomal RNA. This Rhodococcus erythropolis (strain PR4 / NBRC 100887) protein is Small ribosomal subunit protein uS19.